A 279-amino-acid chain; its full sequence is Large ribosomal subunit protein uL2 (279 aa).

A disordered region spans residues 227–279; it reads GVAMNPVDHPMGGGEGKTSGGRHPVSPWGFPTKGKKTRDPNKLSSKFIKSKKR.

This sequence belongs to the universal ribosomal protein uL2 family. In terms of assembly, part of the 50S ribosomal subunit. Forms a bridge to the 30S subunit in the 70S ribosome.

Its function is as follows. One of the primary rRNA binding proteins. Required for association of the 30S and 50S subunits to form the 70S ribosome, for tRNA binding and peptide bond formation. It has been suggested to have peptidyltransferase activity; this is somewhat controversial. Makes several contacts with the 16S rRNA in the 70S ribosome. This chain is Large ribosomal subunit protein uL2, found in Neorickettsia sennetsu (strain ATCC VR-367 / Miyayama) (Ehrlichia sennetsu).